The following is a 303-amino-acid chain: Peptidyl-prolyl isomerase CWC27 (303 aa).

A PPIase cyclophilin-type domain is found at 7–153; sequence ASGKCVLYTT…AEVTIPYFDG (147 aa). Disordered regions lie at residues 155-195 and 208-274; these read SGQK…PPLD and ERLT…TDLA.

This sequence belongs to the cyclophilin-type PPIase family. CWC27 subfamily. As to quaternary structure, associated with the spliceosome.

It localises to the cytoplasm. The protein localises to the nucleus. It catalyses the reaction [protein]-peptidylproline (omega=180) = [protein]-peptidylproline (omega=0). PPIases accelerate the folding of proteins. It catalyzes the cis-trans isomerization of proline imidic peptide bonds in oligopeptides. Involved in pre-mRNA splicing. In Eremothecium gossypii (strain ATCC 10895 / CBS 109.51 / FGSC 9923 / NRRL Y-1056) (Yeast), this protein is Peptidyl-prolyl isomerase CWC27 (CWC27).